Reading from the N-terminus, the 811-residue chain is Hypoxia-inducible factor 1-alpha (811 aa).

A disordered region spans residues 1–27 (MDSPGGVTDKKRISSERRKEKSRDAAR). Residues 8–27 (TDKKRISSERRKEKSRDAAR) show a composition bias toward basic and acidic residues. The bHLH domain maps to 17 to 70 (RRKEKSRDAARCRRSKESEVFYELAHQLPLPHTVSAHLDKASIMRLTISYLRMR). 2 PAS domains span residues 80-157 (TEAN…PVKK) and 228-298 (PHPS…FTKG). Positions 302 to 345 (TGQYRMLAKQGGYVWVETQATVIYNTKNSQPQCIVCVNYVLSGI) constitute a PAC domain. Positions 401 to 587 (APAAGDTIIS…LSPLESSSSG (187 aa)) are ODD. A 4-hydroxyproline modification is found at Pro-402. The segment at 490–518 (PQVQEQPTSPSDASTSQSSPEPSSPNDYC) is disordered. The segment covering 496–514 (PTSPSDASTSQSSPEPSSP) has biased composition (low complexity). The tract at residues 529–573 (FKLELVEKLFAIDTEAKNPFSTQETDLDLEMLAPYIPMDDDFQLR) is NTAD. 4-hydroxyproline is present on Pro-562. The segment at 576-785 (DQLSPLESSS…GLPQLTSYDC (210 aa)) is ID. The span at 634 to 652 (NDTSSAPASPYSGNRSRTA) shows a compositional bias: polar residues. Residues 634-655 (NDTSSAPASPYSGNRSRTASPI) form a disordered region. Short sequence motifs (nuclear localization signal) lie at residues 703 to 706 (RKRK) and 718 to 721 (GIGS). Residues 771–811 (SMDESGLPQLTSYDCEVNAPIQGNRNLLQGEELLRALDQVN) form a CTAD region. Position 788 is a (3S)-3-hydroxyasparagine (Asn-788).

As to quaternary structure, efficient DNA binding requires heterodimerization of an alpha and a beta/ARNT subunit. Post-translationally, in normoxia, is hydroxylated on Pro-402 and Pro-562. The hydroxylated prolines promote interaction with VHL, initiating rapid ubiquitination and subsequent proteasomal degradation. Under hypoxia, proline hydroxylation is impaired and ubiquitination is attenuated, resulting in stabilization. In normoxia, is hydroxylated on Asn-788, thus abrogating interaction with CREBBP and EP300 and preventing transcriptional activation. In terms of processing, the iron and 2-oxoglutarate dependent 3-hydroxylation of asparagine is (S) stereospecific within HIF CTAD domains.

Its subcellular location is the cytoplasm. It localises to the nucleus. The protein localises to the nucleus speckle. Induced by reactive oxygen species (ROS). Functions as a master transcriptional regulator of the adaptive response to hypoxia. Under hypoxic conditions, activates the transcription of over 40 genes, including erythropoietin, glucose transporters, glycolytic enzymes, vascular endothelial growth factor, HILPDA, and other genes whose protein products increase oxygen delivery or facilitate metabolic adaptation to hypoxia. Plays an essential role in embryonic vascularization, tumor angiogenesis and pathophysiology of ischemic disease. This is Hypoxia-inducible factor 1-alpha (HIF1A) from Gallus gallus (Chicken).